Consider the following 357-residue polypeptide: DnaJ homolog subfamily C member 25 (357 aa).

The helical transmembrane segment at 19 to 39 (WLLLAPLLLVPLLARPAEALV) threads the bilayer. Residues 48–121 (DCYEVLGVSR…ETRKDYDYML (74 aa)) enclose the J domain. The next 2 helical transmembrane spans lie at 147–167 (VVILVSVCAISMFQYFSWWNS) and 241–261 (LLLFQVILAPVHLCSYIAWYC).

This sequence belongs to the DNAJC25 family.

Its subcellular location is the membrane. The protein is DnaJ homolog subfamily C member 25 (Dnajc25) of Mus musculus (Mouse).